Here is a 342-residue protein sequence, read N- to C-terminus: Glycerol-1-phosphate dehydrogenase [NAD(P)+] (342 aa).

NAD(+) is bound by residues 84 to 88 (GRPID) and 106 to 109 (TSAS). Substrate is bound at residue Asp-111. Ser-115 contributes to the NAD(+) binding site. Asp-160 contributes to the substrate binding site. Asp-160 and His-241 together coordinate Zn(2+). Residue His-245 coordinates substrate. A Zn(2+)-binding site is contributed by His-260.

This sequence belongs to the glycerol-1-phosphate dehydrogenase family. In terms of assembly, homodimer. It depends on Zn(2+) as a cofactor.

The protein localises to the cytoplasm. It catalyses the reaction sn-glycerol 1-phosphate + NAD(+) = dihydroxyacetone phosphate + NADH + H(+). The catalysed reaction is sn-glycerol 1-phosphate + NADP(+) = dihydroxyacetone phosphate + NADPH + H(+). The protein operates within membrane lipid metabolism; glycerophospholipid metabolism. Functionally, catalyzes the NAD(P)H-dependent reduction of dihydroxyacetonephosphate (DHAP or glycerone phosphate) to glycerol 1-phosphate (G1P). The G1P thus generated is used as the glycerophosphate backbone of phospholipids in the cellular membranes of Archaea. The polypeptide is Glycerol-1-phosphate dehydrogenase [NAD(P)+] (Pyrobaculum arsenaticum (strain DSM 13514 / JCM 11321 / PZ6)).